The following is a 396-amino-acid chain: Purine ribonucleoside efflux pump NepI (396 aa).

The Cytoplasmic segment spans residues 1-21 (MSEFIAENRGANAITRPNWSA). Residues 22–42 (VFSVAFCVACLIIVEFLPVSL) traverse the membrane as a helical segment. Residues 43 to 54 (LTPMAQDLGISE) lie on the Periplasmic side of the membrane. The helical transmembrane segment at 55–75 (GVAGQSVTVTAFVAMFASLFI) threads the bilayer. Residues 76–85 (TQTIQATDRR) are Cytoplasmic-facing. Residues 86–106 (YVVILFAVLLTLSCLLVSFAN) form a helical membrane-spanning segment. Residue Ser-107 is a topological domain, periplasmic. The chain crosses the membrane as a helical span at residues 108-128 (FSLLLIGRACLGLALGGFWAM). The Cytoplasmic segment spans residues 129 to 147 (SASLTMRLVPPRTVPKALS). The helical transmembrane segment at 148 to 168 (VIFGAVSIALVIAAPLGSFLG) threads the bilayer. At 169–175 (ELIGWRN) the chain is on the periplasmic side. A helical transmembrane segment spans residues 176–196 (VFNAAAAMGVLCIFWIIKSLP). The Cytoplasmic portion of the chain corresponds to 197–215 (SLPGEPSHQKQNTFRLLQR). Residues 216–236 (PGVMAGMIAIFMSFAGQFAFF) traverse the membrane as a helical segment. The Periplasmic portion of the chain corresponds to 237-255 (TYIRPVYMNLAGFGVDGLT). A helical membrane pass occupies residues 256–276 (LVLLSFGIASFVGTSLSSFIL). Topologically, residues 277 to 281 (KRSVK) are cytoplasmic. A helical transmembrane segment spans residues 282–302 (LALAGAPFVLALSALVLTLWG). Topologically, residues 303 to 305 (SYK) are periplasmic. Residues 306–326 (IVATGVAIIWGLTFALIPVGW) traverse the membrane as a helical segment. The Cytoplasmic segment spans residues 327–343 (STWITRSLADQAEKAGS). The helical transmembrane segment at 344–364 (IQVAVIQLANTCGAAIGGYAL) threads the bilayer. The Periplasmic portion of the chain corresponds to 365–366 (DN). The helical transmembrane segment at 367–387 (IGLTSPLMLSGTLMLLTALLV) threads the bilayer. Residues 388–396 (TAKVKMKKS) lie on the Cytoplasmic side of the membrane.

Belongs to the major facilitator superfamily. DHA1 family. NepI (TC 2.A.1.2.26) subfamily.

The protein localises to the cell inner membrane. The enzyme catalyses inosine(in) + H(+)(out) = inosine(out) + H(+)(in). The catalysed reaction is guanosine(in) + H(+)(out) = guanosine(out) + H(+)(in). Involved in the efflux of purine ribonucleosides, such as inosine and guanosine. In Escherichia coli O6:H1 (strain CFT073 / ATCC 700928 / UPEC), this protein is Purine ribonucleoside efflux pump NepI.